A 276-amino-acid chain; its full sequence is 4-hydroxy-tetrahydrodipicolinate reductase (276 aa).

Residues 10–15 (GALGKM), D36, and 109–111 (GTT) each bind NAD(+). H165 acts as the Proton donor/acceptor in catalysis. H166 serves as a coordination point for (S)-2,3,4,5-tetrahydrodipicolinate. The Proton donor role is filled by K169. Position 175-176 (175-176 (GT)) interacts with (S)-2,3,4,5-tetrahydrodipicolinate.

Belongs to the DapB family.

The protein resides in the cytoplasm. It carries out the reaction (S)-2,3,4,5-tetrahydrodipicolinate + NAD(+) + H2O = (2S,4S)-4-hydroxy-2,3,4,5-tetrahydrodipicolinate + NADH + H(+). It catalyses the reaction (S)-2,3,4,5-tetrahydrodipicolinate + NADP(+) + H2O = (2S,4S)-4-hydroxy-2,3,4,5-tetrahydrodipicolinate + NADPH + H(+). The protein operates within amino-acid biosynthesis; L-lysine biosynthesis via DAP pathway; (S)-tetrahydrodipicolinate from L-aspartate: step 4/4. Functionally, catalyzes the conversion of 4-hydroxy-tetrahydrodipicolinate (HTPA) to tetrahydrodipicolinate. In Prochlorococcus marinus (strain SARG / CCMP1375 / SS120), this protein is 4-hydroxy-tetrahydrodipicolinate reductase.